Consider the following 1202-residue polypeptide: Protein jagged-2 (1202 aa).

The Extracellular portion of the chain corresponds to 1-1037; sequence GACCDGDGRT…ETVVMGGSST (1037 aa). An N-linked (GlcNAc...) asparagine glycan is attached at Asn107. The DSL domain maps to 150-194; the sequence is VRCDENYYSATCNKFCRPRNDFFGHYTCDQYGNKACMDGWMGKEC. 42 disulfide bridges follow: Cys152–Cys161, Cys165–Cys177, Cys185–Cys194, Cys199–Cys210, Cys203–Cys216, Cys218–Cys227, Cys230–Cys241, Cys236–Cys247, Cys249–Cys258, Cys265–Cys277, Cys271–Cys287, Cys289–Cys298, Cys305–Cys316, Cys310–Cys325, Cys327–Cys336, Cys343–Cys354, Cys348–Cys363, Cys365–Cys374, Cys381–Cys392, Cys386–Cys401, Cys403–Cys412, Cys419–Cys429, Cys423–Cys438, Cys440–Cys449, Cys456–Cys467, Cys461–Cys476, Cys478–Cys487, Cys495–Cys506, Cys500–Cys515, Cys517–Cys526, Cys544–Cys567, Cys561–Cys577, Cys579–Cys588, Cys595–Cys606, Cys600–Cys615, Cys617–Cys626, Cys633–Cys644, Cys638–Cys653, Cys655–Cys664, Cys671–Cys682, Cys676–Cys691, and Cys693–Cys702. The EGF-like 1 domain occupies 195–228; it reads KEAVCKQGCNLLHGGCTVPGECRCSYGWQGKFCD. In terms of domain architecture, EGF-like 2; atypical spans 229–259; the sequence is ECVPYPGCVHGSCVEPWHCDCETNWGGLLCD. EGF-like domains are found at residues 261 to 299 and 301 to 337; these read DLNY…KNCE and AEHA…PTCA. The EGF-like 5; calcium-binding domain maps to 339–375; it reads DIDECASNPCAAGGTCVDQVDGFECICPEQWVGATCQ. The region spanning 377–413 is the EGF-like 6; calcium-binding domain; it reads DANECEGKPCLNAFSCKNLIGGYYCDCLPGWKGANCH. The 36-residue stretch at 415-450 folds into the EGF-like 7; calcium-binding domain; sequence NINDCHGQCQHGGTCKDLVNGYQCVCPRGFGGRHCE. EGF-like domains follow at residues 452–488 and 490–527; these read EYYK…PLCE and DVDL…KNCS. A glycan (N-linked (GlcNAc...) asparagine) is linked at Asn525. The EGF-like 10; atypical domain occupies 529-589; that stretch reads PRETCPGGAC…DSGFTGTYCH (61 aa). Asn574 carries an N-linked (GlcNAc...) asparagine glycan. The EGF-like 11; calcium-binding domain occupies 591–627; the sequence is NIDDCMGQPCRNGGTCIDEVDSFACFCPSGWEGELCD. One can recognise an EGF-like 12; calcium-binding domain in the interval 629–665; it reads NPNDCLPDPCHSRGRCYDLVNDFYCVCDDGWKDKTCH. EGF-like domains lie at 667-703 and 706-742; these read REFQ…STCT and KNSS…RTCT. Asn707 carries an N-linked (GlcNAc...) asparagine glycan. Cystine bridges form between Cys710/Cys721, Cys715/Cys730, Cys732/Cys741, Cys748/Cys759, Cys753/Cys768, Cys770/Cys779, Cys786/Cys797, Cys791/Cys806, and Cys808/Cys817. Residues 744–780 form the EGF-like 15; calcium-binding domain; the sequence is NTNDCNPLPCYNGGICVDGVNWFRCECAPGFAGPDCR. The EGF-like 16; calcium-binding domain occupies 782-818; it reads NIDECQSSPCAYGATCVDEINGYRCSCPPGRSGPRCQ. Residue Asn1015 is glycosylated (N-linked (GlcNAc...) asparagine). A helical membrane pass occupies residues 1038 to 1058; the sequence is GLLVPVLCSVFSVLWLACMVI. Residues 1059 to 1202 lie on the Cytoplasmic side of the membrane; sequence CVWWTRKRRK…TKDVRCAGRE (144 aa). 3 stretches are compositionally biased toward basic and acidic residues: residues 1070–1080, 1147–1159, and 1185–1202; these read RERSRLPRDES, LSRG…RSRE, and VDNR…AGRE. A disordered region spans residues 1070-1202; the sequence is RERSRLPRDE…TKDVRCAGRE (133 aa). A Phosphoserine modification is found at Ser1080.

The protein resides in the membrane. Its function is as follows. Putative Notch ligand involved in the mediation of Notch signaling. May have a role in neurogenesis in the peripheral nervous system, limb development and in the adult brain. The sequence is that of Protein jagged-2 (Jag2) from Rattus norvegicus (Rat).